We begin with the raw amino-acid sequence, 275 residues long: Nuclear egress protein 2 (275 aa).

Residues 1–251 (MAGLGKPYTG…GLKHLRIGPP (251 aa)) lie on the Perinuclear space side of the membrane. The tract at residues 137 to 181 (KGRLGLDARPMMASMWISCFVRMPRVQLAFRFMGPEDAGRTRRIL) is interaction with NEC1. The helical transmembrane segment at 252-272 (ALVLAAGLVLGAAIWWVVGAG) threads the bilayer. Over 273–275 (ARL) the chain is Nuclear.

It belongs to the herpesviridae NEC2 protein family. As to quaternary structure, forms a heterohexameric complex with NEC1. Interacts with glycoprotein D; this interaction recruits glycoprotein D and glycoprotein M to the inner nuclear membrane. Phosphorylated by viral kinase US3.

It localises to the host nucleus inner membrane. Plays an essential role in virion nuclear egress, the first step of virion release from infected cell. Within the host nucleus, NEC1 interacts with the newly formed capsid through the vertexes and directs it to the inner nuclear membrane by associating with NEC2. Induces the budding of the capsid at the inner nuclear membrane as well as its envelopment into the perinuclear space. There, the NEC1/NEC2 complex promotes the fusion of the enveloped capsid with the outer nuclear membrane and the subsequent release of the viral capsid into the cytoplasm where it will reach the secondary budding sites in the host Golgi or trans-Golgi network. This Homo sapiens (Human) protein is Nuclear egress protein 2.